A 120-amino-acid polypeptide reads, in one-letter code: U13-lycotoxin-Ls1e (120 aa).

Residues 1–16 (MKILFVLISILYAVYC) form the signal peptide. Positions 17-54 (FSSEEDVDSAYLANELEPVEDINSEQYAALEPKEEQER) are excised as a propeptide. Cystine bridges form between Cys56–Cys70, Cys63–Cys76, Cys69–Cys87, and Cys78–Cys85. Residues 56-95 (CAGMGRDCKDDCDCCLNIATCNCWFGRYFCSCTFGDYQTC) enclose the Agouti domain.

This sequence belongs to the neurotoxin 05 (agouti) family. In terms of processing, contains 6 disulfide bonds. Expressed by the venom gland.

Its subcellular location is the secreted. The protein is U13-lycotoxin-Ls1e of Lycosa singoriensis (Wolf spider).